We begin with the raw amino-acid sequence, 319 residues long: tRNA uridine(34) hydroxylase (319 aa).

Residues 127–221 (KQEDTVIIDA…YGKDPEVQGE (95 aa)) enclose the Rhodanese domain. The active-site Cysteine persulfide intermediate is the Cys181.

It belongs to the TrhO family.

It catalyses the reaction uridine(34) in tRNA + AH2 + O2 = 5-hydroxyuridine(34) in tRNA + A + H2O. In terms of biological role, catalyzes oxygen-dependent 5-hydroxyuridine (ho5U) modification at position 34 in tRNAs. In Bacillus anthracis (strain A0248), this protein is tRNA uridine(34) hydroxylase.